Reading from the N-terminus, the 317-residue chain is Type II methyltransferase M.MgeORF184P (317 aa).

This sequence belongs to the N(4)/N(6)-methyltransferase family.

It catalyses the reaction a 2'-deoxyadenosine in DNA + S-adenosyl-L-methionine = an N(6)-methyl-2'-deoxyadenosine in DNA + S-adenosyl-L-homocysteine + H(+). Probably recognizes the double-stranded sequence 5'-CTAT-3' and methylates A-3 on only one strand; as the bacterial DNA is methylated on this sequence and this is the only type II methylase in the genome, it is probably responsible for all of the methylation on this site in the genome. The chain is Type II methyltransferase M.MgeORF184P from Mycoplasma genitalium (strain ATCC 33530 / DSM 19775 / NCTC 10195 / G37) (Mycoplasmoides genitalium).